Here is a 156-residue protein sequence, read N- to C-terminus: ATP synthase subunit b (156 aa).

The chain crosses the membrane as a helical span at residues 7–29 (LLGQAISFAMFVWFCMKYVWPPI).

This sequence belongs to the ATPase B chain family. F-type ATPases have 2 components, F(1) - the catalytic core - and F(0) - the membrane proton channel. F(1) has five subunits: alpha(3), beta(3), gamma(1), delta(1), epsilon(1). F(0) has three main subunits: a(1), b(2) and c(10-14). The alpha and beta chains form an alternating ring which encloses part of the gamma chain. F(1) is attached to F(0) by a central stalk formed by the gamma and epsilon chains, while a peripheral stalk is formed by the delta and b chains.

The protein resides in the cell inner membrane. Its function is as follows. F(1)F(0) ATP synthase produces ATP from ADP in the presence of a proton or sodium gradient. F-type ATPases consist of two structural domains, F(1) containing the extramembraneous catalytic core and F(0) containing the membrane proton channel, linked together by a central stalk and a peripheral stalk. During catalysis, ATP synthesis in the catalytic domain of F(1) is coupled via a rotary mechanism of the central stalk subunits to proton translocation. Functionally, component of the F(0) channel, it forms part of the peripheral stalk, linking F(1) to F(0). This chain is ATP synthase subunit b, found in Vibrio vulnificus (strain CMCP6).